The following is a 317-amino-acid chain: Malate dehydrogenase (317 aa).

Residues 15-20 (GSGNIG) and Asp-39 each bind NAD(+). Substrate contacts are provided by Arg-88 and Arg-94. NAD(+) is bound by residues Asn-101 and 124–126 (VTN). Positions 126 and 157 each coordinate substrate. His-181 serves as the catalytic Proton acceptor.

The protein belongs to the LDH/MDH superfamily. MDH type 3 family.

It carries out the reaction (S)-malate + NAD(+) = oxaloacetate + NADH + H(+). In terms of biological role, catalyzes the reversible oxidation of malate to oxaloacetate. The sequence is that of Malate dehydrogenase from Ehrlichia ruminantium (strain Gardel).